A 734-amino-acid polypeptide reads, in one-letter code: Elongation factor 2 (734 aa).

In terms of domain architecture, tr-type G spans 18 to 259 (EQIRNIGITA…MVVKYVPNPR (242 aa)). GTP is bound by residues 27 to 34 (AHVDHGKT), 93 to 97 (DTPGH), and 147 to 150 (NKID). Histidine 600 is modified (diphthamide).

Belongs to the TRAFAC class translation factor GTPase superfamily. Classic translation factor GTPase family. EF-G/EF-2 subfamily.

The protein localises to the cytoplasm. In terms of biological role, catalyzes the GTP-dependent ribosomal translocation step during translation elongation. During this step, the ribosome changes from the pre-translocational (PRE) to the post-translocational (POST) state as the newly formed A-site-bound peptidyl-tRNA and P-site-bound deacylated tRNA move to the P and E sites, respectively. Catalyzes the coordinated movement of the two tRNA molecules, the mRNA and conformational changes in the ribosome. The protein is Elongation factor 2 (fusA) of Desulfurococcus mucosus (Desulfurococcus mobilis).